The sequence spans 340 residues: GTPase Obg (340 aa).

Residues 1-158 form the Obg domain; sequence MSFIDEAKVY…KYITLKLKII (158 aa). Residues 159-325 form the OBG-type G domain; it reads SDIGIIGLPN…LSTLIQYIHK (167 aa). Residues 165–172, 190–194, 211–214, 278–281, and 306–308 contribute to the GTP site; these read GLPNAGKS, FTTLE, DIPG, NKSD, and SSI. Residues S172 and T192 each contribute to the Mg(2+) site.

It belongs to the TRAFAC class OBG-HflX-like GTPase superfamily. OBG GTPase family. Monomer. Mg(2+) is required as a cofactor.

It is found in the cytoplasm. An essential GTPase which binds GTP, GDP and possibly (p)ppGpp with moderate affinity, with high nucleotide exchange rates and a fairly low GTP hydrolysis rate. Plays a role in control of the cell cycle, stress response, ribosome biogenesis and in those bacteria that undergo differentiation, in morphogenesis control. This chain is GTPase Obg, found in Ehrlichia chaffeensis (strain ATCC CRL-10679 / Arkansas).